A 413-amino-acid chain; its full sequence is SET and MYND domain-containing protein DDB_G0273591 (413 aa).

In terms of domain architecture, SET spans 6–311; that stretch reads DGLKLSNSEL…KGDQINISYL (306 aa). Residues 51–95 form an MYND-type zinc finger; sequence CYNCIKLIKSPSPQQVPRCFGCNEVWYCSEKCKQDNQAKHQHYEC. The segment at 205 to 232 is disordered; the sequence is DNNNNNNNNNNNNNNNNNNNNNNNNNNN. Residues 216 to 243 adopt a coiled-coil conformation; the sequence is NNNNNNNNNNNNNNNNNNNIEELIKLIR.

The protein belongs to the class V-like SAM-binding methyltransferase superfamily.

Its function is as follows. Probable methyltransferase. This is SET and MYND domain-containing protein DDB_G0273591 from Dictyostelium discoideum (Social amoeba).